The chain runs to 643 residues: RNA-binding protein RO60 (643 aa).

In terms of domain architecture, TROVE spans 63–473; the sequence is VENNAGGFVF…AFVNAPPTGK (411 aa). The interval 186–390 is RNA-binding; sequence RTPTHLFEFV…SMPMTAMIRN (205 aa). The segment at 465–643 is VWFA-like domain; that stretch reads FVNAPPTGKR…IVHEFVTGKI (179 aa). A divalent metal cation is bound by residues serine 482, serine 484, and threonine 549.

It belongs to the Ro 60 kDa family.

Its subcellular location is the cytoplasm. In terms of biological role, RNA-binding protein that binds to misfolded non-coding RNAs, pre-5S rRNA, and several small cytoplasmic RNA molecules known as Y RNAs. This Caenorhabditis elegans protein is RNA-binding protein RO60.